Here is a 143-residue protein sequence, read N- to C-terminus: Transcriptional regulator MraZ (143 aa).

SpoVT-AbrB domains follow at residues 5-47 (EYTH…PLIE) and 76-119 (ACEC…DAER).

This sequence belongs to the MraZ family. In terms of assembly, forms oligomers.

Its subcellular location is the cytoplasm. The protein localises to the nucleoid. This is Transcriptional regulator MraZ from Limosilactobacillus fermentum (strain NBRC 3956 / LMG 18251) (Lactobacillus fermentum).